The sequence spans 404 residues: F-box only protein 12 (404 aa).

Positions methionine 1–leucine 44 constitute an F-box domain. Residues leucine 383 to valine 403 form a helical membrane-spanning segment.

The protein resides in the membrane. The protein is F-box only protein 12 (FBX12) of Arabidopsis thaliana (Mouse-ear cress).